An 813-amino-acid polypeptide reads, in one-letter code: Protein SBE22 (813 aa).

3 disordered regions span residues 1–66 (MIRP…HGHA), 107–240 (EIFS…GEFG), and 331–359 (QKDS…NRES). Basic and acidic residues predominate over residues 56–66 (RPSDNLFHGHA). A compositionally biased stretch (low complexity) spans 107–121 (EIFSTSSSDTQSNIS). Residues 127–138 (SEDHSFGMDKSV) show a composition bias toward basic and acidic residues. 3 stretches are compositionally biased toward polar residues: residues 139-160 (DNSS…NGDS), 169-200 (VSVN…NRSM), and 214-234 (KNSS…NRSV).

This sequence belongs to the SBE2 family.

Its subcellular location is the cytoplasm. It localises to the golgi apparatus. Its function is as follows. With SBE2, is involved in cell wall integrity and polarity processes like bud growth. This is Protein SBE22 (SBE22) from Candida glabrata (strain ATCC 2001 / BCRC 20586 / JCM 3761 / NBRC 0622 / NRRL Y-65 / CBS 138) (Yeast).